Here is a 346-residue protein sequence, read N- to C-terminus: Elongation factor Ts (346 aa).

An involved in Mg(2+) ion dislocation from EF-Tu region spans residues 80 to 83 (TDFV).

It belongs to the EF-Ts family.

It localises to the cytoplasm. Functionally, associates with the EF-Tu.GDP complex and induces the exchange of GDP to GTP. It remains bound to the aminoacyl-tRNA.EF-Tu.GTP complex up to the GTP hydrolysis stage on the ribosome. This chain is Elongation factor Ts, found in Streptococcus pneumoniae (strain 70585).